Here is a 316-residue protein sequence, read N- to C-terminus: Dof zinc finger protein DOF5.7 (316 aa).

Residues 1–42 form a disordered region; it reads MSSHTNLPSPKPVPKPDHRISGTSQTKKPPSSSVAQDQQNLK. Residues 21-42 show a composition bias toward polar residues; it reads SGTSQTKKPPSSSVAQDQQNLK. A Dof-type zinc finger spans residues 41–95; that stretch reads LKCPRCNSPNTKFCYYNNYSLSQPRHFCKSCRRYWTRGGALRNVPIGGGCRKTKK. Cysteine 43, cysteine 46, cysteine 68, and cysteine 71 together coordinate Zn(2+). 2 disordered regions span residues 92–111 and 257–294; these read KTKK…SSSS and NSSS…NTGG. The segment covering 101–111 has biased composition (low complexity); that stretch reads SSMNTLPSSSS. Positions 257-291 are enriched in polar residues; it reads NSSSPSSPTKKGDNQTEWYFGNNSDNEGVISNNAN.

It is found in the nucleus. In terms of biological role, transcription factor that binds specifically to a 5'-AA[AG]G-3' consensus core sequence. The polypeptide is Dof zinc finger protein DOF5.7 (DOF5.7) (Arabidopsis thaliana (Mouse-ear cress)).